The chain runs to 304 residues: tRNA pseudouridine synthase B (304 aa).

The active-site Nucleophile is Asp-41.

It belongs to the pseudouridine synthase TruB family. Type 1 subfamily.

The catalysed reaction is uridine(55) in tRNA = pseudouridine(55) in tRNA. In terms of biological role, responsible for synthesis of pseudouridine from uracil-55 in the psi GC loop of transfer RNAs. This Nitratidesulfovibrio vulgaris (strain ATCC 29579 / DSM 644 / CCUG 34227 / NCIMB 8303 / VKM B-1760 / Hildenborough) (Desulfovibrio vulgaris) protein is tRNA pseudouridine synthase B.